The chain runs to 135 residues: Ribonuclease VapC35 (135 aa).

The PINc domain maps to 2 to 123 (IYLETSALVK…DNRLKEAAEA (122 aa)). Mg(2+)-binding residues include E5 and D91.

Belongs to the PINc/VapC protein family. It depends on Mg(2+) as a cofactor.

Functionally, toxic component of a type II toxin-antitoxin (TA) system. An RNase. Its toxic effect is neutralized by coexpression with cognate antitoxin VapB35. The polypeptide is Ribonuclease VapC35 (Mycobacterium tuberculosis (strain CDC 1551 / Oshkosh)).